Consider the following 206-residue polypeptide: Probable GTP-binding protein EngB (206 aa).

Residues 8–195 (RSDEVVLVGR…EDAVNSHFDA (188 aa)) form the EngB-type G domain. Residues 16 to 23 (GRSNVGKS), 41 to 45 (GVTRQ), 60 to 63 (DLPG), 140 to 143 (NKMD), and 175 to 177 (ITA) each bind GTP. The Mg(2+) site is built by S23 and T43.

It belongs to the TRAFAC class TrmE-Era-EngA-EngB-Septin-like GTPase superfamily. EngB GTPase family. It depends on Mg(2+) as a cofactor.

Necessary for normal cell division and for the maintenance of normal septation. The polypeptide is Probable GTP-binding protein EngB (Halobacterium salinarum (strain ATCC 29341 / DSM 671 / R1)).